The chain runs to 118 residues: T cell receptor gamma variable 3 (118 aa).

The first 17 residues, 1-17 (MRWALLVLLAFLSPASQ), serve as a signal peptide directing secretion. Positions 18 to 118 (KSSNLEGRTK…GVYYCATWDR (101 aa)) constitute an Ig-like domain. C41 and C113 are joined by a disulfide. N106 is a glycosylation site (N-linked (GlcNAc...) asparagine).

As to quaternary structure, gamma-delta TR is a heterodimer composed of a gamma and delta chain; disulfide-linked. The gamma-delta TR is associated with the transmembrane signaling CD3 coreceptor proteins following the stoichiometry: a single gamma-delta TR heterodimer associates with one CD3D-CD3E heterodimer, one CD3G-CD3E heterodimer and one CD247 homodimer forming a stable octameric structure. Upon activation, gamma-delta TR complex associates with FCER1G to initiate intracellular signaling.

It localises to the cell membrane. Its function is as follows. V region of the variable domain of T cell receptor (TR) gamma chain that participates in the antigen recognition. Gamma-delta TRs recognize a variety of self and foreign non-peptide antigens frequently expressed at the epithelial boundaries between the host and external environment, including endogenous lipids presented by MH-like protein CD1D and phosphoantigens presented by butyrophilin-like molecule BTN3A1. Upon antigen recognition induces rapid, innate-like immune responses involved in pathogen clearance and tissue repair. Binding of gamma-delta TR complex to antigen triggers phosphorylation of immunoreceptor tyrosine-based activation motifs (ITAMs) in the CD3 chains by the LCK and FYN kinases, allowing the recruitment, phosphorylation, and activation of ZAP70 that facilitates phosphorylation of the scaffolding proteins LCP2 and LAT. This lead to the formation of a supramolecular signalosome that recruits the phospholipase PLCG1, resulting in calcium mobilization and ERK activation, ultimately leading to T cell expansion and differentiation into effector cells. Gamma-delta TRs are produced through somatic rearrangement of a limited repertoire of variable (V), diversity (D), and joining (J) genes. The potential diversity of gamma-delta TRs is conferred by the unique ability to rearrange (D) genes in tandem and to utilize all three reading frames. The combinatorial diversity is considerably increased by the sequence exonuclease trimming and random nucleotide (N) region additions which occur during the V-(D)-J rearrangements. The polypeptide is T cell receptor gamma variable 3 (Homo sapiens (Human)).